A 517-amino-acid chain; its full sequence is Lysophosphatidylcholine acyltransferase 2B (517 aa).

Asn29 is a glycosylation site (N-linked (GlcNAc...) asparagine). 3 helical membrane-spanning segments follow: residues 70–90 (IVFLFLLLWPVALLSTINLPI), 103–123 (LIKPVFIFLLRLAFFCAGFLI), and 137–157 (IFVVAPHSTFFDAIAVIVAGL). Residues 143–148 (HSTFFD) carry the HXXXXD motif motif. EF-hand domains lie at 388 to 423 (PISEPLRQLFSLFDRNQDGTIDFREYVIGLTVLCNP) and 425 to 460 (NTEKILQMSFKLFDLDEDGYITEQELTTMLRAAFGV). Ca(2+) contacts are provided by Asp401, Asn403, Asp405, Thr407, Glu412, Asp438, Asp440, Asp442, Tyr444, and Glu449.

The protein belongs to the 1-acyl-sn-glycerol-3-phosphate acyltransferase family.

The protein localises to the membrane. It functions in the pathway lipid metabolism; phospholipid metabolism. In terms of biological role, probable acetyltransferase. This is Lysophosphatidylcholine acyltransferase 2B (Lpcat2b) from Rattus norvegicus (Rat).